The following is a 203-amino-acid chain: Monothiol glutaredoxin-7 (203 aa).

Positions 1–32 are cleaved as a signal peptide; it reads MAIVINKRNVRVLVITNLLLIVVFFVLRNSNA. Positions 88–191 constitute a Glutaredoxin domain; the sequence is AAEYNKIMEQ…DSFKKWSDGA (104 aa). Residue Cys108 participates in [2Fe-2S] cluster binding.

Belongs to the glutaredoxin family. Monothiol subfamily.

The sequence is that of Monothiol glutaredoxin-7 (GRX7) from Saccharomyces cerevisiae (strain ATCC 204508 / S288c) (Baker's yeast).